The chain runs to 2264 residues: Protein Ycf2 (2264 aa).

Residue 1611 to 1618 participates in ATP binding; the sequence is GSIGTGRS.

It belongs to the Ycf2 family.

The protein resides in the plastid. The protein localises to the chloroplast stroma. Functionally, probable ATPase of unknown function. Its presence in a non-photosynthetic plant (Epifagus virginiana) and experiments in tobacco indicate that it has an essential function which is probably not related to photosynthesis. The polypeptide is Protein Ycf2 (Lactuca sativa (Garden lettuce)).